We begin with the raw amino-acid sequence, 409 residues long: Glucose-1-phosphate adenylyltransferase (409 aa).

Alpha-D-glucose 1-phosphate contacts are provided by residues glycine 168, 183–184, and serine 201; that span reads EK.

It belongs to the bacterial/plant glucose-1-phosphate adenylyltransferase family. As to quaternary structure, homotetramer.

The enzyme catalyses alpha-D-glucose 1-phosphate + ATP + H(+) = ADP-alpha-D-glucose + diphosphate. Its pathway is glycan biosynthesis; glycogen biosynthesis. In terms of biological role, involved in the biosynthesis of ADP-glucose, a building block required for the elongation reactions to produce glycogen. Catalyzes the reaction between ATP and alpha-D-glucose 1-phosphate (G1P) to produce pyrophosphate and ADP-Glc. The polypeptide is Glucose-1-phosphate adenylyltransferase (Corynebacterium glutamicum (strain R)).